Reading from the N-terminus, the 338-residue chain is Mitochondrial glutathione transporter SLC25A40 (338 aa).

Solcar repeat units lie at residues 13–131 (VTPL…LTAL), 139–223 (NESR…LKKW), and 233–327 (PTFM…GKSF). A run of 6 helical transmembrane segments spans residues 19 to 39 (MFAS…FDVV), 103 to 123 (LWSG…IYFT), 145 to 165 (IVAG…LELI), 199 to 220 (WAPT…YEVL), 239 to 259 (FTSG…FDVV), and 298 to 318 (GLFT…AVMI).

It belongs to the mitochondrial carrier (TC 2.A.29) family.

The protein resides in the mitochondrion inner membrane. It catalyses the reaction glutathione(in) = glutathione(out). In terms of biological role, probable mitochondrial transporter required for glutathione import into mitochondria. Glutathione, which plays key roles in oxidative metabolism, is produced exclusively in the cytosol and is imported in many organelles. Mitochondrial glutathione is required for the activity and stability of proteins containing iron-sulfur clusters, as well as erythropoiesis. This is Mitochondrial glutathione transporter SLC25A40 from Bos taurus (Bovine).